The chain runs to 381 residues: L-lactate dehydrogenase (381 aa).

The region spanning 1-380 (MIISASTDYR…SADSLVRELG (380 aa)) is the FMN hydroxy acid dehydrogenase domain. Tyrosine 24 contributes to the substrate binding site. The FMN site is built by serine 106 and glutamine 127. Position 129 (tyrosine 129) interacts with substrate. Position 155 (threonine 155) interacts with FMN. Arginine 164 serves as a coordination point for substrate. FMN is bound at residue lysine 251. The active-site Proton acceptor is histidine 275. Arginine 278 contributes to the substrate binding site. 306–330 (DSGIRTGLDVVRMIALGADSVLLGR) serves as a coordination point for FMN.

Belongs to the FMN-dependent alpha-hydroxy acid dehydrogenase family. Homotetramer. The cofactor is FMN.

It is found in the cell inner membrane. The enzyme catalyses (S)-lactate + A = pyruvate + AH2. Its function is as follows. Catalyzes the conversion of L-lactate to pyruvate. Is coupled to the respiratory chain. In Pseudomonas paraeruginosa (strain DSM 24068 / PA7) (Pseudomonas aeruginosa (strain PA7)), this protein is L-lactate dehydrogenase.